Consider the following 377-residue polypeptide: Spermidine/putrescine import ATP-binding protein PotA (377 aa).

Residues 18-248 (IRLSGISKSF…PKNLFVARFI (231 aa)) enclose the ABC transporter domain. ATP is bound at residue 50–57 (GPSGCGKT).

Belongs to the ABC transporter superfamily. Spermidine/putrescine importer (TC 3.A.1.11.1) family. The complex is composed of two ATP-binding proteins (PotA), two transmembrane proteins (PotB and PotC) and a solute-binding protein (PotD).

The protein localises to the cell inner membrane. It catalyses the reaction ATP + H2O + polyamine-[polyamine-binding protein]Side 1 = ADP + phosphate + polyamineSide 2 + [polyamine-binding protein]Side 1.. In terms of biological role, part of the ABC transporter complex PotABCD involved in spermidine/putrescine import. Responsible for energy coupling to the transport system. The polypeptide is Spermidine/putrescine import ATP-binding protein PotA (Vibrio parahaemolyticus serotype O3:K6 (strain RIMD 2210633)).